The following is a 228-amino-acid chain: ATP synthase subunit a (228 aa).

Transmembrane regions (helical) follow at residues Tyr-14–Phe-34, Trp-71–Leu-91, Ile-101–Tyr-121, Phe-139–Leu-159, Ala-165–Met-185, and Val-188–Val-208.

Belongs to the ATPase A chain family. In terms of assembly, F-type ATPases have 2 components, CF(1) - the catalytic core - and CF(0) - the membrane proton channel. CF(1) has five subunits: alpha(3), beta(3), gamma(1), delta(1), epsilon(1). CF(0) has three main subunits: a, b and c.

It localises to the mitochondrion inner membrane. Functionally, mitochondrial membrane ATP synthase (F(1)F(0) ATP synthase or Complex V) produces ATP from ADP in the presence of a proton gradient across the membrane which is generated by electron transport complexes of the respiratory chain. F-type ATPases consist of two structural domains, F(1) - containing the extramembraneous catalytic core and F(0) - containing the membrane proton channel, linked together by a central stalk and a peripheral stalk. During catalysis, ATP synthesis in the catalytic domain of F(1) is coupled via a rotary mechanism of the central stalk subunits to proton translocation. Key component of the proton channel; it may play a direct role in the translocation of protons across the membrane. The sequence is that of ATP synthase subunit a (ATP6) from Pisaster ochraceus (Ochre sea star).